The following is a 201-amino-acid chain: Reticulon-like protein B10 (201 aa).

A Reticulon domain is found at 14 to 201 (VADLIMWKNR…KPTNKIKKMQ (188 aa)). 3 helical membrane passes run 25 to 45 (GGFLLLGSTTLLWFLFEKCGY), 46 to 66 (SFFPFVVNTQLLSVVILFLWA), and 135 to 155 (FLNFLTILYLGVVLSLLIPFL).

The protein localises to the endoplasmic reticulum membrane. The protein is Reticulon-like protein B10 (RTNLB10) of Arabidopsis thaliana (Mouse-ear cress).